A 500-amino-acid polypeptide reads, in one-letter code: MDALSLVNSTVAKFNEVTQLQASPAILSTALTAIAGIIVLLVITSKRRSSLKLPPGKLGLPFIGETLEFVKALRSDTLRQFVEEREGKFGRVFKTSLLGKPTVILCGPAGNRLVLSNEEKLLHVSWSAQIARILGLNSVAVKRGDDHRVLRVALAGFLGSAGLQLYIGKMSALIRNHINEKWKGKDEVNVLSLVRDLVMDNSAILFFNIYDKERKQQLHEILKIILASHFGIPLNIPGFLYRKALKGSLKRKKILSALLEKRKDELRSRLASSNQDLLSVLLSFRDERGKPLSDEAVLDNCFAMLDASYDTTTSQMTLILKMLSSNPECFEKVVQEQLEIASNKKEGEEITMKDIKAMKYTWQVLQESLRMLSPVFGTLRKTMNDINHDGYTIPKGWQVVWTTYSTHQKDIYFKQPDKFMPSRFEEEDGHLDAYTFVPFGGGRRTCPGWEYAKVEILLFLHHFVKAFSGYTPTDPHERICGYPVPLVPVKGFPIKLIARS.

The helical transmembrane segment at 24-44 (PAILSTALTAIAGIIVLLVIT) threads the bilayer. Cysteine 446 contacts heme.

The protein belongs to the cytochrome P450 family.

It localises to the microsome membrane. It carries out the reaction taxusin + reduced [NADPH--hemoprotein reductase] + O2 = 7beta-hydroxytaxusin + oxidized [NADPH--hemoprotein reductase] + H2O + H(+). It catalyses the reaction 2alpha-hydroxytaxusin + reduced [NADPH--hemoprotein reductase] + O2 = 2alpha,7beta-dihydroxytaxusin + oxidized [NADPH--hemoprotein reductase] + H2O + H(+). The catalysed reaction is 7beta-hydroxytaxusin + reduced [NADPH--hemoprotein reductase] + O2 = 2alpha,7beta-dihydroxytaxusin + oxidized [NADPH--hemoprotein reductase] + H2O + H(+). The protein operates within alkaloid biosynthesis; taxol biosynthesis. Catalyzes the conversion of taxusin to 7-beta-hydroxytaxusin in taxol biosynthesis. Catalyzes the conversion of 2-alpha-hydroxytaxusin to 2-alpha-7-beta-hydroxytaxusin in taxol biosynthesis. This is Taxoid 7-beta-hydroxylase from Taxus cuspidata (Japanese yew).